We begin with the raw amino-acid sequence, 406 residues long: COP9 signalosome complex subunit 4 (406 aa).

Ala-2 carries the post-translational modification N-acetylalanine. Residue Lys-25 is modified to N6-acetyllysine. The PCI domain occupies Tyr-197–Ala-366.

The protein belongs to the CSN4 family. Component of the CSN complex, composed of COPS1/GPS1, COPS2, COPS3, COPS4, COPS5, COPS6, COPS7 (COPS7A or COPS7B), COPS8 and COPS9. In the complex, it probably interacts directly with COPS1, COPS2, COPS3, COPS5, COPS6, COPS7 (COPS7A or COPS7B) and COPS8. Interacts with TOR1A; the interaction is direct and associates TOR1A and SNAPIN with the CSN complex. Interacts with STON2; controls STON2 neddylation levels. Interacts with ERCC6.

It localises to the cytoplasm. The protein resides in the nucleus. Its subcellular location is the cytoplasmic vesicle. It is found in the secretory vesicle. The protein localises to the synaptic vesicle. In terms of biological role, component of the COP9 signalosome complex (CSN), a complex involved in various cellular and developmental processes. The CSN complex is an essential regulator of the ubiquitin (Ubl) conjugation pathway by mediating the deneddylation of the cullin subunits of SCF-type E3 ligase complexes, leading to decrease the Ubl ligase activity of SCF-type complexes such as SCF, CSA or DDB2. Also involved in the deneddylation of non-cullin subunits such as STON2. The complex is also involved in phosphorylation of p53/TP53, c-jun/JUN, IkappaBalpha/NFKBIA, ITPK1, IRF8/ICSBP and SNAPIN, possibly via its association with CK2 and PKD kinases. CSN-dependent phosphorylation of TP53 and JUN promotes and protects degradation by the Ubl system, respectively. The sequence is that of COP9 signalosome complex subunit 4 (Cops4) from Rattus norvegicus (Rat).